An 878-amino-acid chain; its full sequence is Alanine--tRNA ligase (878 aa).

Zn(2+) is bound by residues histidine 567, histidine 571, cysteine 668, and histidine 672.

This sequence belongs to the class-II aminoacyl-tRNA synthetase family. Zn(2+) serves as cofactor.

It is found in the cytoplasm. It carries out the reaction tRNA(Ala) + L-alanine + ATP = L-alanyl-tRNA(Ala) + AMP + diphosphate. Its function is as follows. Catalyzes the attachment of alanine to tRNA(Ala) in a two-step reaction: alanine is first activated by ATP to form Ala-AMP and then transferred to the acceptor end of tRNA(Ala). Also edits incorrectly charged Ser-tRNA(Ala) and Gly-tRNA(Ala) via its editing domain. The chain is Alanine--tRNA ligase from Magnetococcus marinus (strain ATCC BAA-1437 / JCM 17883 / MC-1).